The primary structure comprises 232 residues: 2-C-methyl-D-erythritol 4-phosphate cytidylyltransferase (232 aa).

It belongs to the IspD/TarI cytidylyltransferase family. IspD subfamily.

The catalysed reaction is 2-C-methyl-D-erythritol 4-phosphate + CTP + H(+) = 4-CDP-2-C-methyl-D-erythritol + diphosphate. It functions in the pathway isoprenoid biosynthesis; isopentenyl diphosphate biosynthesis via DXP pathway; isopentenyl diphosphate from 1-deoxy-D-xylulose 5-phosphate: step 2/6. In terms of biological role, catalyzes the formation of 4-diphosphocytidyl-2-C-methyl-D-erythritol from CTP and 2-C-methyl-D-erythritol 4-phosphate (MEP). The polypeptide is 2-C-methyl-D-erythritol 4-phosphate cytidylyltransferase (Synechococcus sp. (strain ATCC 27144 / PCC 6301 / SAUG 1402/1) (Anacystis nidulans)).